The chain runs to 120 residues: Membrane-anchored ubiquitin-fold protein 4 (120 aa).

The region spanning 7 to 73 (VELKFRLYDG…LENGKTVAQC (67 aa)) is the Ubiquitin-like domain. The S-palmitoyl cysteine moiety is linked to residue C115. A Cysteine methyl ester modification is found at C117. Residue C117 is the site of S-farnesyl cysteine attachment. A propeptide spans 118-120 (TIM) (removed in mature form).

In terms of tissue distribution, ubiquitous.

It localises to the cell membrane. May serve as docking site to facilitate the association of other proteins to the plasma membrane. The chain is Membrane-anchored ubiquitin-fold protein 4 (MUB4) from Arabidopsis thaliana (Mouse-ear cress).